Reading from the N-terminus, the 427-residue chain is MPAIALVGAQWGDEGKGKATDLVGDRVDYVVRYQGGNNAGHTVVIGDQEYALHLLPSGILTPGVIPVIANGVVIDPAVLFEELDALTARGVDVSRLLISANAHLIMPYHRALDKVSERFLGKGRIGTTGRGIGPTYADKTARAGVRVQDMFDPKILRKKLELALNDKNQILTKVYNRRALEVDRILDEYLGYAEKIRPYVVDTSLVLNRALDEGKTVFLEGSQGTLLDIDHGTYPFVTSSSPTAGGACSGSGIGPTRITKVIGILKAYTTRVGSGPFPTELEDEWGEWLRSRGHEYGTTTGRNRRCGWFDAPIARYATRINGITDFFLTKLDVLSGLERIPVCVAYDIDGVRHDEIPMTQTEFHHATPIYEYLDGWNEDISQARSFDDLPKNAQAYVRAIEEMSGAPISAIGVGPGREQTLELRPLV.

Residues 12 to 18 (GDEGKGK) and 40 to 42 (GHT) contribute to the GTP site. The Proton acceptor role is filled by Asp13. Mg(2+)-binding residues include Asp13 and Gly40. Residues 13 to 16 (DEGK), 38 to 41 (NAGH), Thr128, Arg142, Gln223, Thr238, and Arg302 contribute to the IMP site. His41 acts as the Proton donor in catalysis. 298-304 (TTTGRNR) contacts substrate. GTP-binding positions include Arg304, 330–332 (KLD), and 412–414 (GVG).

Belongs to the adenylosuccinate synthetase family. As to quaternary structure, homodimer. Mg(2+) serves as cofactor.

It is found in the cytoplasm. The catalysed reaction is IMP + L-aspartate + GTP = N(6)-(1,2-dicarboxyethyl)-AMP + GDP + phosphate + 2 H(+). It functions in the pathway purine metabolism; AMP biosynthesis via de novo pathway; AMP from IMP: step 1/2. Its function is as follows. Plays an important role in the de novo pathway of purine nucleotide biosynthesis. Catalyzes the first committed step in the biosynthesis of AMP from IMP. This Thermobifida fusca (strain YX) protein is Adenylosuccinate synthetase.